We begin with the raw amino-acid sequence, 150 residues long: Transcriptional regulator MraZ (150 aa).

SpoVT-AbrB domains follow at residues 7 to 55 and 84 to 127; these read SHAI…PEPE and AALM…SEES.

This sequence belongs to the MraZ family. Forms oligomers.

The protein resides in the cytoplasm. It is found in the nucleoid. This chain is Transcriptional regulator MraZ, found in Marinobacter nauticus (strain ATCC 700491 / DSM 11845 / VT8) (Marinobacter aquaeolei).